Here is a 49-residue protein sequence, read N- to C-terminus: Large ribosomal subunit protein bL33 (49 aa).

The protein belongs to the bacterial ribosomal protein bL33 family.

This chain is Large ribosomal subunit protein bL33, found in Streptococcus suis (strain 98HAH33).